Consider the following 492-residue polypeptide: Ribose import ATP-binding protein RbsA (492 aa).

ABC transporter domains lie at 3-239 (IDMR…VGRK) and 238-492 (RKLE…TGGK). 35–42 (GENGAGKS) is a binding site for ATP.

The protein belongs to the ABC transporter superfamily. Ribose importer (TC 3.A.1.2.1) family. As to quaternary structure, the complex is composed of an ATP-binding protein (RbsA), two transmembrane proteins (RbsC) and a solute-binding protein (RbsB).

Its subcellular location is the cell membrane. The catalysed reaction is D-ribose(out) + ATP + H2O = D-ribose(in) + ADP + phosphate + H(+). Part of the ABC transporter complex RbsABC involved in ribose import. Responsible for energy coupling to the transport system. This chain is Ribose import ATP-binding protein RbsA, found in Streptococcus agalactiae serotype V (strain ATCC BAA-611 / 2603 V/R).